A 206-amino-acid polypeptide reads, in one-letter code: Small ribosomal subunit protein uS4 (206 aa).

Residues 96–156 (GRLDNVVYRM…EKSKNQLRIQ (61 aa)) enclose the S4 RNA-binding domain.

This sequence belongs to the universal ribosomal protein uS4 family. As to quaternary structure, part of the 30S ribosomal subunit. Contacts protein S5. The interaction surface between S4 and S5 is involved in control of translational fidelity.

Its function is as follows. One of the primary rRNA binding proteins, it binds directly to 16S rRNA where it nucleates assembly of the body of the 30S subunit. In terms of biological role, with S5 and S12 plays an important role in translational accuracy. The sequence is that of Small ribosomal subunit protein uS4 from Saccharophagus degradans (strain 2-40 / ATCC 43961 / DSM 17024).